We begin with the raw amino-acid sequence, 178 residues long: Deoxyuridine 5'-triphosphate nucleotidohydrolase (178 aa).

The protein belongs to the dUTPase family. It depends on Mg(2+) as a cofactor.

It catalyses the reaction dUTP + H2O = dUMP + diphosphate + H(+). It functions in the pathway pyrimidine metabolism; dUMP biosynthesis; dUMP from dCTP (dUTP route): step 2/2. Functionally, this enzyme is involved in nucleotide metabolism: it produces dUMP, the immediate precursor of thymidine nucleotides and it decreases the intracellular concentration of dUTP so that uracil cannot be incorporated into DNA. The chain is Deoxyuridine 5'-triphosphate nucleotidohydrolase from Fowl adenovirus A serotype 1 (strain CELO / Phelps) (FAdV-1).